The chain runs to 269 residues: Cytochrome c oxidase subunit 3 (269 aa).

7 helical membrane-spanning segments follow: residues 24–44, 46–66, 90–110, 138–160, 167–187, 207–227, and 247–267; these read LFTSISLFILTTATVLFMHGF, GFQYLVPVAVINVMYVMGLWF, GVGLFIISEVFFFLAIFWAFF, PLLNTIILLSSGVTITYAHHSLI, ALYGTVVTILLAIVFTFFQGV, FGTGFHGLHVIIGTAFLAVGL, and ILYWHFVDVVWLFLYISVYYW.

Belongs to the cytochrome c oxidase subunit 3 family. In terms of assembly, component of the cytochrome c oxidase (complex IV, CIV), a multisubunit enzyme composed of a catalytic core of 3 subunits and several supernumerary subunits. The complex exists as a monomer or a dimer and forms supercomplexes (SCs) in the inner mitochondrial membrane with ubiquinol-cytochrome c oxidoreductase (cytochrome b-c1 complex, complex III, CIII).

It localises to the mitochondrion inner membrane. The catalysed reaction is 4 Fe(II)-[cytochrome c] + O2 + 8 H(+)(in) = 4 Fe(III)-[cytochrome c] + 2 H2O + 4 H(+)(out). Functionally, component of the cytochrome c oxidase, the last enzyme in the mitochondrial electron transport chain which drives oxidative phosphorylation. The respiratory chain contains 3 multisubunit complexes succinate dehydrogenase (complex II, CII), ubiquinol-cytochrome c oxidoreductase (cytochrome b-c1 complex, complex III, CIII) and cytochrome c oxidase (complex IV, CIV), that cooperate to transfer electrons derived from NADH and succinate to molecular oxygen, creating an electrochemical gradient over the inner membrane that drives transmembrane transport and the ATP synthase. Cytochrome c oxidase is the component of the respiratory chain that catalyzes the reduction of oxygen to water. Electrons originating from reduced cytochrome c in the intermembrane space (IMS) are transferred via the dinuclear copper A center (CU(A)) of subunit 2 and heme A of subunit 1 to the active site in subunit 1, a binuclear center (BNC) formed by heme A3 and copper B (CU(B)). The BNC reduces molecular oxygen to 2 water molecules using 4 electrons from cytochrome c in the IMS and 4 protons from the mitochondrial matrix. The polypeptide is Cytochrome c oxidase subunit 3 (cox3) (Emericella nidulans (Aspergillus nidulans)).